The following is a 578-amino-acid chain: SWR1 complex bromodomain subunit bdf1 (578 aa).

Positions 1 to 18 (MSSESRENEVKAETKDEI) are enriched in basic and acidic residues. 3 disordered regions span residues 1–89 (MSSE…PPPQ), 192–254 (DAEQ…RKNN), and 504–578 (ADSS…SESA). Residues 22–36 (GSPQLNGDNNIQSSD) are compositionally biased toward polar residues. Basic and acidic residues-rich tracts occupy residues 37–52 (GHND…KRDS) and 60–77 (LKQE…EPTV). One can recognise a Bromo 1 domain in the interval 84-190 (GMPPPQQKYC…EVFERQLKQL (107 aa)). Low complexity predominate over residues 219–242 (NSSVSSTSASVAASTAPKAASPAV). Residues Ser221, Ser223, and Ser224 each carry the phosphoserine modification. Thr225 bears the Phosphothreonine mark. 2 positions are modified to phosphoserine: Ser226 and Ser239. Residues 251–360 (RKNNSQMRFC…NVFKEKWEAR (110 aa)) enclose the Bromo 2 domain. Residues 430–510 (RRDLTKEYGP…KPDADSSEPA (81 aa)) form the NET domain. Residue Ser511 is modified to Phosphoserine. Residues 526-537 (VLSETEQAEKIR) are compositionally biased toward basic and acidic residues. Residues 550-563 (TSPTSPESNNAANV) show a composition bias toward polar residues. Residues 566-578 (SESDNESESSESA) show a composition bias toward acidic residues.

Belongs to the BET family. As to quaternary structure, component of the SWR1 chromatin-remodeling complex.

The protein localises to the nucleus. Functionally, component of the SWR1 complex which mediates the ATP-dependent exchange of histone H2A for the H2A variant HZT1 leading to transcriptional regulation of selected genes by chromatin remodeling. This is SWR1 complex bromodomain subunit bdf1 (bdf1) from Schizosaccharomyces pombe (strain 972 / ATCC 24843) (Fission yeast).